The following is a 329-amino-acid chain: MGDILFSSPQSMFSHTMNKNSILHTHSIIGKTFFSEIGIGISGNSFLLLVHILKFIRGHRPRLTDLPIGLLSLIHLLMLLVAAFIATDIFISRRGWDDIICKFLVYLYRVLRGFSLCTTSMLSILQAIILSPRSSCLAKFKHISPHHISGAILFLSVLYMLIGSQLLVSIIATPNLTMNDFIYVTQSCSILPLSYLMQSIYSTLLAIREFFLISLMVLSNWYMVALLSMHRKQTQHLHGTNLSPKKSPEQSATQTILMLISFFLLMTIYDTIVSCSRTMFLNDPTSYSIELFIMHIYATVSPFVFMSTEKHIVNFLRSLGKRVINFNLH.

The Extracellular portion of the chain corresponds to 1-32; that stretch reads MGDILFSSPQSMFSHTMNKNSILHTHSIIGKT. Residues 33–53 form a helical membrane-spanning segment; sequence FFSEIGIGISGNSFLLLVHIL. Residues 54–65 are Cytoplasmic-facing; the sequence is KFIRGHRPRLTD. A helical transmembrane segment spans residues 66-86; it reads LPIGLLSLIHLLMLLVAAFIA. The Extracellular segment spans residues 87–109; that stretch reads TDIFISRRGWDDIICKFLVYLYR. Cysteine 101 and cysteine 188 are disulfide-bonded. A helical membrane pass occupies residues 110 to 130; the sequence is VLRGFSLCTTSMLSILQAIIL. Topologically, residues 131–150 are cytoplasmic; it reads SPRSSCLAKFKHISPHHISG. A helical transmembrane segment spans residues 151 to 171; sequence AILFLSVLYMLIGSQLLVSII. Over 172–209 the chain is Extracellular; the sequence is ATPNLTMNDFIYVTQSCSILPLSYLMQSIYSTLLAIRE. A glycan (N-linked (GlcNAc...) asparagine) is linked at asparagine 175. Residues 210–230 traverse the membrane as a helical segment; it reads FFLISLMVLSNWYMVALLSMH. The Cytoplasmic portion of the chain corresponds to 231–254; that stretch reads RKQTQHLHGTNLSPKKSPEQSATQ. The helical transmembrane segment at 255–275 threads the bilayer; the sequence is TILMLISFFLLMTIYDTIVSC. Over 276 to 285 the chain is Extracellular; the sequence is SRTMFLNDPT. The helical transmembrane segment at 286–306 threads the bilayer; the sequence is SYSIELFIMHIYATVSPFVFM. The Cytoplasmic portion of the chain corresponds to 307 to 329; that stretch reads STEKHIVNFLRSLGKRVINFNLH.

The protein belongs to the G-protein coupled receptor 1 family.

The protein localises to the cell membrane. In terms of biological role, putative pheromone receptor implicated in the regulation of social and reproductive behavior. This is Vomeronasal type-1 receptor 42 (Vmn1r42) from Mus musculus (Mouse).